The following is a 460-amino-acid chain: Methylenetetrahydrofolate--tRNA-(uracil-5-)-methyltransferase TrmFO (460 aa).

15–20 (GAGLAG) is a binding site for FAD.

This sequence belongs to the MnmG family. TrmFO subfamily. Requires FAD as cofactor.

The protein localises to the cytoplasm. The catalysed reaction is uridine(54) in tRNA + (6R)-5,10-methylene-5,6,7,8-tetrahydrofolate + NADH + H(+) = 5-methyluridine(54) in tRNA + (6S)-5,6,7,8-tetrahydrofolate + NAD(+). It carries out the reaction uridine(54) in tRNA + (6R)-5,10-methylene-5,6,7,8-tetrahydrofolate + NADPH + H(+) = 5-methyluridine(54) in tRNA + (6S)-5,6,7,8-tetrahydrofolate + NADP(+). Functionally, catalyzes the folate-dependent formation of 5-methyl-uridine at position 54 (M-5-U54) in all tRNAs. This Synechococcus sp. (strain CC9902) protein is Methylenetetrahydrofolate--tRNA-(uracil-5-)-methyltransferase TrmFO.